The chain runs to 721 residues: Exocyst complex component 3-like protein 4 (721 aa).

Disordered regions lie at residues 1–52 (MPLP…SLGM) and 94–135 (GLTA…QAES). Positions 22 to 37 (SQTLPVTTWKSNSMKE) are enriched in polar residues. S515 is modified (phosphoserine).

Belongs to the SEC6 family.

The sequence is that of Exocyst complex component 3-like protein 4 (Exoc3l4) from Mus musculus (Mouse).